Here is a 69-residue protein sequence, read N- to C-terminus: Large ribosomal subunit protein uL29 (69 aa).

The protein belongs to the universal ribosomal protein uL29 family.

The chain is Large ribosomal subunit protein uL29 from Methylobacillus flagellatus (strain ATCC 51484 / DSM 6875 / VKM B-1610 / KT).